We begin with the raw amino-acid sequence, 540 residues long: Methionine--tRNA ligase 1 (540 aa).

Residues 10-20 (PYANGSLHLGH) carry the 'HIGH' region motif. Zn(2+) contacts are provided by C141, C144, C153, and C156. Positions 327 to 331 (KISTS) match the 'KMSKS' region motif. Residue T330 participates in ATP binding.

It belongs to the class-I aminoacyl-tRNA synthetase family. MetG type 1 subfamily. Monomer. The cofactor is Zn(2+).

The protein resides in the cytoplasm. The catalysed reaction is tRNA(Met) + L-methionine + ATP = L-methionyl-tRNA(Met) + AMP + diphosphate. In terms of biological role, is required not only for elongation of protein synthesis but also for the initiation of all mRNA translation through initiator tRNA(fMet) aminoacylation. The sequence is that of Methionine--tRNA ligase 1 from Alkaliphilus oremlandii (strain OhILAs) (Clostridium oremlandii (strain OhILAs)).